Reading from the N-terminus, the 306-residue chain is Proline-rich transmembrane protein 1 (306 aa).

The interval 1–142 is disordered; sequence MSSEKSGLPD…PPPAPAQTAQ (142 aa). The Cytoplasmic segment spans residues 1-223; the sequence is MSSEKSGLPD…LEPRRPPHDY (223 aa). Residues 15 to 36 are compositionally biased toward pro residues; sequence TSPPPYNAPQPPAEPPAPPPQA. The span at 40–49 shows a compositional bias: basic residues; the sequence is SHHHHHHHYH. 2 stretches are compositionally biased toward pro residues: residues 87 to 111 and 121 to 137; these read HAPP…PPDP and PLPP…PPAP. The helical transmembrane segment at 224 to 244 threads the bilayer; the sequence is MPIAVLTTICCFWPTGIIAIF. Residues 245-275 are Extracellular-facing; that stretch reads KAVQVRTALARGDMVSAEIASREARNFSFIS. An intramembrane region (helical) is located at residues 276–296; sequence LAVGIAAMVLCTILTVVIIIA. At 297–306 the chain is on the extracellular side; it reads AQHHENYWDP.

The protein belongs to the CD225/Dispanin family. As to quaternary structure, component of the outer core of AMPAR complex. AMPAR complex consists of an inner core made of 4 pore-forming GluA/GRIA proteins (GRIA1, GRIA2, GRIA3 and GRIA4) and 4 major auxiliary subunits arranged in a twofold symmetry. One of the two pairs of distinct binding sites is occupied either by CNIH2, CNIH3 or CACNG2, CACNG3. The other harbors CACNG2, CACNG3, CACNG4, CACNG8 or GSG1L. This inner core of AMPAR complex is complemented by outer core constituents binding directly to the GluA/GRIA proteins at sites distinct from the interaction sites of the inner core constituents. Outer core constituents include at least PRRT1, PRRT2, CKAMP44/SHISA9, FRRS1L and NRN1. The proteins of the inner and outer core serve as a platform for other, more peripherally associated AMPAR constituents. Alone or in combination, these auxiliary subunits control the gating and pharmacology of the AMPAR complex and profoundly impact their biogenesis and protein processing.

It is found in the cell membrane. The protein localises to the synapse. Its function is as follows. Required to maintain a pool of extrasynaptic AMPA-regulated glutamate receptors (AMPAR) which is necessary for synapse development and function. Regulates basal AMPAR function and synaptic transmission during development but is dispensable at mature hippocampal synapses. Plays a role in regulating basal phosphorylation levels of glutamate receptor GRIA1 and promotes GRIA1 and GRIA2 cell surface expression. In Homo sapiens (Human), this protein is Proline-rich transmembrane protein 1.